A 106-amino-acid chain; its full sequence is Small ribosomal subunit protein bS18 (106 aa).

Over residues 1–22 (MSEETTVRPERTERSERPERPQ) the composition is skewed to basic and acidic residues. Residues 1–34 (MSEETTVRPERTERSERPERPQYRGNGPRKRRPF) are disordered.

Belongs to the bacterial ribosomal protein bS18 family. As to quaternary structure, part of the 30S ribosomal subunit. Forms a tight heterodimer with protein bS6.

Binds as a heterodimer with protein bS6 to the central domain of the 16S rRNA, where it helps stabilize the platform of the 30S subunit. The chain is Small ribosomal subunit protein bS18 from Geobacter metallireducens (strain ATCC 53774 / DSM 7210 / GS-15).